The primary structure comprises 173 residues: ATP synthase subunit delta (173 aa).

Belongs to the ATPase delta chain family. F-type ATPases have 2 components, F(1) - the catalytic core - and F(0) - the membrane proton channel. F(1) has five subunits: alpha(3), beta(3), gamma(1), delta(1), epsilon(1). F(0) has three main subunits: a(1), b(2) and c(10-14). The alpha and beta chains form an alternating ring which encloses part of the gamma chain. F(1) is attached to F(0) by a central stalk formed by the gamma and epsilon chains, while a peripheral stalk is formed by the delta and b chains.

The protein localises to the cell inner membrane. Functionally, f(1)F(0) ATP synthase produces ATP from ADP in the presence of a proton or sodium gradient. F-type ATPases consist of two structural domains, F(1) containing the extramembraneous catalytic core and F(0) containing the membrane proton channel, linked together by a central stalk and a peripheral stalk. During catalysis, ATP synthesis in the catalytic domain of F(1) is coupled via a rotary mechanism of the central stalk subunits to proton translocation. In terms of biological role, this protein is part of the stalk that links CF(0) to CF(1). It either transmits conformational changes from CF(0) to CF(1) or is implicated in proton conduction. This Campylobacter jejuni subsp. doylei (strain ATCC BAA-1458 / RM4099 / 269.97) protein is ATP synthase subunit delta.